Reading from the N-terminus, the 1064-residue chain is Error-prone DNA polymerase (1064 aa).

It belongs to the DNA polymerase type-C family. DnaE2 subfamily.

Its subcellular location is the cytoplasm. It catalyses the reaction DNA(n) + a 2'-deoxyribonucleoside 5'-triphosphate = DNA(n+1) + diphosphate. Its function is as follows. DNA polymerase involved in damage-induced mutagenesis and translesion synthesis (TLS). It is not the major replicative DNA polymerase. In Azoarcus sp. (strain BH72), this protein is Error-prone DNA polymerase.